Here is a 734-residue protein sequence, read N- to C-terminus: MRKPADKAQVDAELQRVVELRHPEPHAVLGIHPDGDGVVIRAFRPDAVAIHVLPESGGRVAMTHRPGGVYEARINGKDQTFNYLLEVEYPGKRVFTLRDPYSFLPTLGEMDLYYAGEGRHERLWERMGAHLLHHHGVRGTSFAVWAPTAAGVSVVGDFNGWDGRLHSMRRMGSSGIWELFVPEVGEGTRYKFEIRPGQGGPNVLKADPFAFRTEVPPATASVVHDLARYTWGDAAWLEQRAQRRDVHHQPWSVYEVHLGSWRRVVEDGDRPMTYRELAPALAEYIKFTGFTHIELLPVAEHPYGGSWGYQVGGYYAPTARFGHPDDLRFFIDHMHQEGIGVLVDWVPGHFPRDLHALGQFDGTALYEHADPRKGAQPDWGTLVFNFGRNEVRNFLIANALFWIEEYHIDGLRVDAVASMLYLDYSRKQGEWIPNRWGGRENEEAIHFLRELNETVHRKHPGVVVIAEESTAWPKVSAPVSEGGLGFDYKWNMGWMHDTLSYFSKDPIYRQYHHNQLTFGLLYAFSEQFMLPLSHDEVVHGKGSLYGRMPGDPWQKRANLRALFAWMWAHPGKKLVFMGGEFGQPAEWNHDKSLDWHLTHDPGHHGILQLVSDLNRIYRDMPALHDADGEPMGFQWLQPDSAAYNVFAFVRRARQPGRHVVCIANLSPTVRENYRVGFPFQGRYVELLNTDAEQYGGSNLGNMGQIHTEPTGWDGQPASATLTLPPLSVLWFTPG.

Catalysis depends on Asp-414, which acts as the Nucleophile. Glu-467 functions as the Proton donor in the catalytic mechanism.

It belongs to the glycosyl hydrolase 13 family. GlgB subfamily. Monomer.

The enzyme catalyses Transfers a segment of a (1-&gt;4)-alpha-D-glucan chain to a primary hydroxy group in a similar glucan chain.. It functions in the pathway glycan biosynthesis; glycogen biosynthesis. Functionally, catalyzes the formation of the alpha-1,6-glucosidic linkages in glycogen by scission of a 1,4-alpha-linked oligosaccharide from growing alpha-1,4-glucan chains and the subsequent attachment of the oligosaccharide to the alpha-1,6 position. The sequence is that of 1,4-alpha-glucan branching enzyme GlgB from Myxococcus xanthus (strain DK1622).